Here is a 216-residue protein sequence, read N- to C-terminus: Pyrophosphatase PpaX (216 aa).

D9 serves as the catalytic Nucleophile.

The protein belongs to the HAD-like hydrolase superfamily. PpaX family. The cofactor is Mg(2+).

It catalyses the reaction diphosphate + H2O = 2 phosphate + H(+). Its function is as follows. Hydrolyzes pyrophosphate formed during P-Ser-HPr dephosphorylation by HPrK/P. Might play a role in controlling the intracellular pyrophosphate pool. The protein is Pyrophosphatase PpaX of Bacillus cereus (strain Q1).